Here is a 260-residue protein sequence, read N- to C-terminus: 3'-5' ssDNA/RNA exonuclease TatD (260 aa).

Glu92, His128, and His153 together coordinate a divalent metal cation.

Belongs to the metallo-dependent hydrolases superfamily. TatD-type hydrolase family. TatD subfamily. Monomer. Requires Mg(2+) as cofactor.

Its subcellular location is the cytoplasm. In terms of biological role, 3'-5' exonuclease that prefers single-stranded DNA and RNA. May play a role in the H(2)O(2)-induced DNA damage repair. The sequence is that of 3'-5' ssDNA/RNA exonuclease TatD from Yersinia pseudotuberculosis serotype O:3 (strain YPIII).